The chain runs to 126 residues: Precursor of CEP2 (126 aa).

An N-terminal signal peptide occupies residues Met-1 to Asp-19. Residues Lys-20–Asn-80 constitute a propeptide that is removed on maturation. Pro-84 and Pro-87 each carry hydroxyproline. Residues Pro-96 to Asn-105 constitute a propeptide that is removed on maturation. A hydroxyproline mark is found at Pro-109, Pro-112, and Pro-116. Positions Pro-121 to Val-126 are excised as a propeptide.

It belongs to the C-terminally encoded plant signaling peptide (CEP) family. In terms of assembly, interacts with CEP receptors (e.g. CEPR1 and CEPR2). Post-translationally, the mature small signaling peptide is generated by proteolytic processing of the longer precursor. Mostly expressed in roots. Present in cotyledons, shoot apical meristem (SAM), leaves, inflorescence stems and flowers.

Its subcellular location is the secreted. The protein resides in the extracellular space. The protein localises to the apoplast. In terms of biological role, extracellular signaling peptide that represses primary root growth rate. Negatively regulates the number of leaves and flowering, and modulates leaf morphology. Regulates systemic nitrogen (N)-demand signaling. Mediates up-regulation of genes involved in N uptake and assimilation pathways. This chain is Precursor of CEP2, found in Arabidopsis thaliana (Mouse-ear cress).